A 287-amino-acid chain; its full sequence is Elongation factor Ts (287 aa).

The involved in Mg(2+) ion dislocation from EF-Tu stretch occupies residues 80-83 (TDFL).

The protein belongs to the EF-Ts family.

It is found in the cytoplasm. Functionally, associates with the EF-Tu.GDP complex and induces the exchange of GDP to GTP. It remains bound to the aminoacyl-tRNA.EF-Tu.GTP complex up to the GTP hydrolysis stage on the ribosome. This Pseudomonas putida (strain W619) protein is Elongation factor Ts.